The primary structure comprises 419 residues: Tyrosine--tRNA ligase (419 aa).

Tyrosine 42 serves as a coordination point for L-tyrosine. The short motif at 47 to 56 (ATAPSLHVGS) is the 'HIGH' region element. 2 residues coordinate L-tyrosine: tyrosine 179 and glutamine 183. Positions 239–243 (KMGKT) match the 'KMSKS' region motif. Residue lysine 242 coordinates ATP. Positions 353 to 418 (VVLAALFADA…GKKKIVLVKP (66 aa)) constitute an S4 RNA-binding domain.

The protein belongs to the class-I aminoacyl-tRNA synthetase family. TyrS type 1 subfamily. In terms of assembly, homodimer.

It localises to the cytoplasm. It carries out the reaction tRNA(Tyr) + L-tyrosine + ATP = L-tyrosyl-tRNA(Tyr) + AMP + diphosphate + H(+). Functionally, catalyzes the attachment of tyrosine to tRNA(Tyr) in a two-step reaction: tyrosine is first activated by ATP to form Tyr-AMP and then transferred to the acceptor end of tRNA(Tyr). The protein is Tyrosine--tRNA ligase of Caulobacter vibrioides (strain ATCC 19089 / CIP 103742 / CB 15) (Caulobacter crescentus).